Consider the following 1689-residue polypeptide: Cullin-7 (1689 aa).

The CPH domain maps to 349–422 (RASFASFNTY…HWHMLEILGF (74 aa)). Positions 793-972 (PIQIPFFDVF…HTRLFYMVRA (180 aa)) constitute a DOC domain. Residues 1321 to 1337 (VAHEDSGREDKSKKEEA) show a composition bias toward basic and acidic residues. A disordered region spans residues 1321–1371 (VAHEDSGREDKSKKEEAIGEAAAVAMAEEEDQGKKEEGEEEGEGEDEEEER). Residues 1358–1370 (GEEEGEGEDEEEE) are compositionally biased toward acidic residues. Lysine 1567 participates in a covalent cross-link: Glycyl lysine isopeptide (Lys-Gly) (interchain with G-Cter in NEDD8).

It belongs to the cullin family. In terms of assembly, component of the 3M complex, composed of core components CUL7, CCDC8 and OBSL1. Component of the Cul7-RING(FBXW8) complex consisting of CUL7, RBX1, SKP1 and FBXW8. Within the Cul7-RING(FBXW8) complex interacts with FBXW8 and RBX1, but not with SKP1. Interacts with CUL1 (via the C-terminal domain); the interaction seems to be mediated by FBXW8; it is likely specific to FBXW8, but not other F-box proteins. Interacts (via the CPH domain) with p53/TP53; the interaction preferentially involves tetrameric and dimeric p53/TP53; this interaction recruits p53/TP53 for ubiquitination by neddylated CUL1-RBX1. The CUL7-CUL9 heterodimer seems to interact specifically with p53/TP53. Interacts with FBXW8; interaction is mutually exclusive of binding to CUL9 or p53/TP53. Interacts with CUL9; leading to inhibited CUL9 activity. Interacts with OBSL1. Interacts (as part of the 3M complex) with HDAC4 and HDAC5; it is negatively regulated by ANKRA2.

The protein localises to the cytoplasm. It localises to the cytoskeleton. Its subcellular location is the microtubule organizing center. The protein resides in the centrosome. It is found in the perinuclear region. The protein localises to the golgi apparatus. The protein operates within protein modification; protein ubiquitination. Functionally, core component of the 3M and Cul7-RING(FBXW8) complexes, which mediate the ubiquitination and subsequent proteasomal degradation of target proteins. Core component of the 3M complex, a complex required to regulate microtubule dynamics and genome integrity. It is unclear how the 3M complex regulates microtubules, it could act by controlling the level of a microtubule stabilizer. The Cul7-RING(FBXW8) complex alone lacks ubiquitination activity and does not promote polyubiquitination and proteasomal degradation of p53/TP53. However it mediates recruitment of p53/TP53 for ubiquitination by neddylated CUL1-RBX1. Interaction with CUL9 is required to inhibit CUL9 activity and ubiquitination of BIRC5. The Cul7-RING(FBXW8) complex also mediates ubiquitination and consequent degradation of target proteins such as GORASP1, IRS1 and MAP4K1/HPK1. Ubiquitination of GORASP1 regulates Golgi morphogenesis and dendrite patterning in brain. Mediates ubiquitination and degradation of IRS1 in a mTOR-dependent manner: the Cul7-RING(FBXW8) complex recognizes and binds IRS1 previously phosphorylated by S6 kinase (RPS6KB1 or RPS6KB2). The Cul7-RING(FBXW8) complex also mediates ubiquitination of MAP4K1/HPK1: recognizes and binds autophosphorylated MAP4K1/HPK1, leading to its degradation, thereby affecting cell proliferation and differentiation. Acts as a regulator in trophoblast cell epithelial-mesenchymal transition and placental development. While the Cul7-RING(FBXW8) and the 3M complexes are associated and involved in common processes, CUL7 and the Cul7-RING(FBXW8) complex may have additional functions. Probably plays a role in the degradation of proteins involved in endothelial proliferation and/or differentiation. This Mus musculus (Mouse) protein is Cullin-7 (Cul7).